A 543-amino-acid polypeptide reads, in one-letter code: Cytochrome P450 monooxygenase 205 (543 aa).

The chain crosses the membrane as a helical span at residues 9–29; that stretch reads LISLGVAALAVAVWKAIVMVI. N-linked (GlcNAc...) asparagine glycans are attached at residues Asn332 and Asn434. Cys479 is a heme binding site.

The protein belongs to the cytochrome P450 family. Heme is required as a cofactor.

It is found in the membrane. It functions in the pathway secondary metabolite biosynthesis. In terms of biological role, cytochrome P450 monooxygenase that is able to use carbazole and phenanthrene as substrates for oxidation. The polypeptide is Cytochrome P450 monooxygenase 205 (Postia placenta (strain ATCC 44394 / Madison 698-R) (Brown rot fungus)).